Reading from the N-terminus, the 252-residue chain is Imidazole glycerol phosphate synthase subunit HisF (252 aa).

Residues D11 and D130 contribute to the active site.

This sequence belongs to the HisA/HisF family. In terms of assembly, heterodimer of HisH and HisF.

It is found in the cytoplasm. It carries out the reaction 5-[(5-phospho-1-deoxy-D-ribulos-1-ylimino)methylamino]-1-(5-phospho-beta-D-ribosyl)imidazole-4-carboxamide + L-glutamine = D-erythro-1-(imidazol-4-yl)glycerol 3-phosphate + 5-amino-1-(5-phospho-beta-D-ribosyl)imidazole-4-carboxamide + L-glutamate + H(+). Its pathway is amino-acid biosynthesis; L-histidine biosynthesis; L-histidine from 5-phospho-alpha-D-ribose 1-diphosphate: step 5/9. In terms of biological role, IGPS catalyzes the conversion of PRFAR and glutamine to IGP, AICAR and glutamate. The HisF subunit catalyzes the cyclization activity that produces IGP and AICAR from PRFAR using the ammonia provided by the HisH subunit. This is Imidazole glycerol phosphate synthase subunit HisF from Staphylococcus aureus (strain USA300).